The primary structure comprises 417 residues: Inactive cytochrome P450 76AD1 (417 aa).

The chain crosses the membrane as a helical span at residues 4-24 (ATLAMILAIWFISFHFIKLLF).

Belongs to the cytochrome P450 family.

It is found in the membrane. The protein operates within pigment biosynthesis; betalain biosynthesis. Its function is as follows. Inactive cytochrome unable to convert L-DOPA to cyclo-DOPA in the betalain pathway and producing a yellow mutant phenotype. A frameshift replaces 108 amino acids of the active protein found in red beets (AC I3PFJ5) with 27 new residues followed by a stop codon. The polypeptide is Inactive cytochrome P450 76AD1 (Beta vulgaris (Sugar beet)).